Reading from the N-terminus, the 378-residue chain is Chaperone protein DnaJ (378 aa).

Residues 6-70 (DYYDVLGVSR…QKRQQYDQFG (65 aa)) enclose the J domain. A CR-type zinc finger spans residues 137–219 (GKTSEISYSR…CHGKGVKTQK (83 aa)). Zn(2+) contacts are provided by C150, C153, C167, C170, C193, C196, C207, and C210. CXXCXGXG motif repeat units follow at residues 150 to 157 (CEVCKGSG), 167 to 174 (CDKCGGSG), 193 to 200 (CDKCTGSG), and 207 to 214 (CHNCHGKG).

This sequence belongs to the DnaJ family. As to quaternary structure, homodimer. The cofactor is Zn(2+).

The protein resides in the cytoplasm. Functionally, participates actively in the response to hyperosmotic and heat shock by preventing the aggregation of stress-denatured proteins and by disaggregating proteins, also in an autonomous, DnaK-independent fashion. Unfolded proteins bind initially to DnaJ; upon interaction with the DnaJ-bound protein, DnaK hydrolyzes its bound ATP, resulting in the formation of a stable complex. GrpE releases ADP from DnaK; ATP binding to DnaK triggers the release of the substrate protein, thus completing the reaction cycle. Several rounds of ATP-dependent interactions between DnaJ, DnaK and GrpE are required for fully efficient folding. Also involved, together with DnaK and GrpE, in the DNA replication of plasmids through activation of initiation proteins. This Lactobacillus delbrueckii subsp. bulgaricus (strain ATCC 11842 / DSM 20081 / BCRC 10696 / JCM 1002 / NBRC 13953 / NCIMB 11778 / NCTC 12712 / WDCM 00102 / Lb 14) protein is Chaperone protein DnaJ.